The chain runs to 194 residues: Acireductone dioxygenase 1 (194 aa).

The segment at 1–21 (MEAWYMDDSADDQRKPHHRSP) is disordered. Residues His87, His89, Glu93, and His132 each coordinate Fe(2+). The Ni(2+) site is built by His87, His89, Glu93, and His132.

Belongs to the acireductone dioxygenase (ARD) family. Fe(2+) serves as cofactor. Requires Ni(2+) as cofactor.

Its subcellular location is the cytoplasm. It is found in the nucleus. It catalyses the reaction 1,2-dihydroxy-5-(methylsulfanyl)pent-1-en-3-one + O2 = 4-methylsulfanyl-2-oxobutanoate + formate + 2 H(+). The enzyme catalyses 1,2-dihydroxy-5-(methylsulfanyl)pent-1-en-3-one + O2 = 3-(methylsulfanyl)propanoate + CO + formate + 2 H(+). It participates in amino-acid biosynthesis; L-methionine biosynthesis via salvage pathway; L-methionine from S-methyl-5-thio-alpha-D-ribose 1-phosphate: step 5/6. Catalyzes 2 different reactions between oxygen and the acireductone 1,2-dihydroxy-3-keto-5-methylthiopentene (DHK-MTPene) depending upon the metal bound in the active site. Fe-containing acireductone dioxygenase (Fe-ARD) produces formate and 2-keto-4-methylthiobutyrate (KMTB), the alpha-ketoacid precursor of methionine in the methionine recycle pathway. Ni-containing acireductone dioxygenase (Ni-ARD) produces methylthiopropionate, carbon monoxide and formate, and does not lie on the methionine recycle pathway. In Physcomitrium patens (Spreading-leaved earth moss), this protein is Acireductone dioxygenase 1.